Consider the following 451-residue polypeptide: Exodeoxyribonuclease 7 large subunit (451 aa).

It belongs to the XseA family. Heterooligomer composed of large and small subunits.

Its subcellular location is the cytoplasm. The catalysed reaction is Exonucleolytic cleavage in either 5'- to 3'- or 3'- to 5'-direction to yield nucleoside 5'-phosphates.. Functionally, bidirectionally degrades single-stranded DNA into large acid-insoluble oligonucleotides, which are then degraded further into small acid-soluble oligonucleotides. The polypeptide is Exodeoxyribonuclease 7 large subunit (Bacillus cytotoxicus (strain DSM 22905 / CIP 110041 / 391-98 / NVH 391-98)).